Reading from the N-terminus, the 203-residue chain is uncharacterized protein (203 aa).

A signal peptide spans 1–23 (MKKIYKALISSLLLSTSINVAYA). An SH3b domain is found at 24 to 87 (ETQYVTENLS…ILNSDLSSTP (64 aa)). Residues 167–189 (IAIQWFIYGGSVLGVGLLFGLLI) traverse the membrane as a helical segment.

To E.coli YgiM.

The protein resides in the membrane. This is an uncharacterized protein from Haemophilus influenzae (strain ATCC 51907 / DSM 11121 / KW20 / Rd).